We begin with the raw amino-acid sequence, 184 residues long: Ribosome-recycling factor (184 aa).

Belongs to the RRF family.

It localises to the cytoplasm. Its function is as follows. Responsible for the release of ribosomes from messenger RNA at the termination of protein biosynthesis. May increase the efficiency of translation by recycling ribosomes from one round of translation to another. In Clostridium botulinum (strain Okra / Type B1), this protein is Ribosome-recycling factor.